Reading from the N-terminus, the 146-residue chain is Large ribosomal subunit protein uL15 (146 aa).

A disordered region spans residues 1 to 51; sequence MKLHELQPAPGSRKKAVRVGRGIGSGNGKTSGRGQKGQNARSGGGVRLGFE. 2 stretches are compositionally biased toward gly residues: residues 21–35 and 42–51; these read RGIG…GRGQ and SGGGVRLGFE.

It belongs to the universal ribosomal protein uL15 family. In terms of assembly, part of the 50S ribosomal subunit.

Binds to the 23S rRNA. In Geobacillus kaustophilus (strain HTA426), this protein is Large ribosomal subunit protein uL15.